The sequence spans 469 residues: Putative dipeptidase SAUSA300_1697 (469 aa).

His84 is a binding site for Zn(2+). The active site involves Asp86. Asp115 contributes to the Zn(2+) binding site. Glu149 (proton acceptor) is an active-site residue. 3 residues coordinate Zn(2+): Glu150, Asp173, and His440.

Belongs to the peptidase M20A family. Requires Zn(2+) as cofactor.

The polypeptide is Putative dipeptidase SAUSA300_1697 (Staphylococcus aureus (strain USA300)).